A 165-amino-acid chain; its full sequence is 3-hydroxyacyl-[acyl-carrier-protein] dehydratase FERN, mitochondrial (165 aa).

The N-terminal 35 residues, 1-35, are a transit peptide targeting the mitochondrion; that stretch reads MLMKRLFSSSHVFSSSSASSNLLKIGSVLKQARTF. The 89-residue stretch at 36 to 124 folds into the MaoC-like domain; the sequence is ADDDVLGYSK…AVSIRQIKNK (89 aa).

In terms of assembly, homodimer.

The protein resides in the mitochondrion. It catalyses the reaction a (3R)-hydroxyacyl-[ACP] = a (2E)-enoyl-[ACP] + H2O. The protein operates within lipid metabolism; fatty acid biosynthesis. In terms of biological role, 3-hydroxyl-[acyl-carrier-protein] (3-hydroxyl-ACP) dehydratase required for mitochondrial fatty acid synthesis (mtFAS). Essential for photorespiration, tomato morphogenesis and plant development, probably by influencing mitochondrial membrane lipid composition and other lipid metabolic pathways, and by contributing to energy supply and reactive oxygen species (ROS) homeostasis. In Solanum lycopersicum (Tomato), this protein is 3-hydroxyacyl-[acyl-carrier-protein] dehydratase FERN, mitochondrial.